Reading from the N-terminus, the 409-residue chain is Evolutionarily conserved signaling intermediate in Toll pathway, mitochondrial (409 aa).

The N-terminal 26 residues, 1–26, are a transit peptide targeting the mitochondrion; it reads MLRRAQCLLRLHGNGGHSLVSRFRNY. 2 disordered regions span residues 27–53 and 383–409; these read ATDEGNPKQNPNPNPRAQKPGTKNLPA and EEIEGGASVPATSDNSSQDEHISSRQK. The segment covering 400–409 has biased composition (basic and acidic residues); sequence QDEHISSRQK.

The protein belongs to the ECSIT family. In terms of assembly, interacts with Traf6. Associates with mitochondrial complex I assembly intermediates during its biogenesis.

The protein localises to the cytoplasm. Its subcellular location is the nucleus. It localises to the mitochondrion. In terms of biological role, as part of the MCIA complex, involved in the assembly of the mitochondrial complex I. Involved in the innate immune response; promotes the production of antibacterial peptides. The chain is Evolutionarily conserved signaling intermediate in Toll pathway, mitochondrial from Drosophila melanogaster (Fruit fly).